The chain runs to 901 residues: Protein translocase subunit SecA (901 aa).

Residues Gln-87, 105-109 (GEGKT), and Asp-512 each bind ATP. 4 residues coordinate Zn(2+): Cys-885, Cys-887, Cys-896, and His-897.

This sequence belongs to the SecA family. Monomer and homodimer. Part of the essential Sec protein translocation apparatus which comprises SecA, SecYEG and auxiliary proteins SecDF-YajC and YidC. Zn(2+) serves as cofactor.

It is found in the cell inner membrane. It localises to the cytoplasm. The catalysed reaction is ATP + H2O + cellular proteinSide 1 = ADP + phosphate + cellular proteinSide 2.. Part of the Sec protein translocase complex. Interacts with the SecYEG preprotein conducting channel. Has a central role in coupling the hydrolysis of ATP to the transfer of proteins into and across the cell membrane, serving both as a receptor for the preprotein-SecB complex and as an ATP-driven molecular motor driving the stepwise translocation of polypeptide chains across the membrane. The chain is Protein translocase subunit SecA from Salmonella paratyphi A (strain ATCC 9150 / SARB42).